We begin with the raw amino-acid sequence, 447 residues long: Methionine aminopeptidase 2 (447 aa).

The interval 1-86 (MAGATEGEDT…KNKKKKKKKI (86 aa)) is disordered. The segment covering 8 to 32 (EDTKVIESKINELNIDKPKLEDNNE) has biased composition (basic and acidic residues). Positions 43-60 (GGDDDDDKEDDDDNDEIT) are enriched in acidic residues. Over residues 71 to 86 (KKKKKNKNKKKKKKKI) the composition is skewed to basic residues. His-198 contacts substrate. A divalent metal cation-binding residues include Asp-218, Asp-229, and His-300. Residue His-308 participates in substrate binding. A divalent metal cation is bound by residues Glu-333 and Glu-428.

The protein belongs to the peptidase M24A family. Methionine aminopeptidase eukaryotic type 2 subfamily. The cofactor is Co(2+). Zn(2+) serves as cofactor. Mn(2+) is required as a cofactor. It depends on Fe(2+) as a cofactor.

It localises to the cytoplasm. It catalyses the reaction Release of N-terminal amino acids, preferentially methionine, from peptides and arylamides.. Its function is as follows. Cotranslationally removes the N-terminal methionine from nascent proteins. The N-terminal methionine is often cleaved when the second residue in the primary sequence is small and uncharged (Met-Ala-, Cys, Gly, Pro, Ser, Thr, or Val). The sequence is that of Methionine aminopeptidase 2 from Candida albicans (strain WO-1) (Yeast).